Here is a 123-residue protein sequence, read N- to C-terminus: Potassium voltage-gated channel subfamily E member 2 (123 aa).

N-linked (GlcNAc...) asparagine glycosylation is found at Asn-6 and Asn-29. The chain crosses the membrane as a helical span at residues 49–69 (VILYLMVMIGMFAFIVVAILV). Residues 70–123 (STVKSKRREHSQDPYHQYIVEDWQQKYRSQILHLEDSKATIHENLGATGFTVSP) are Cytoplasmic-facing.

This sequence belongs to the potassium channel KCNE family. As to quaternary structure, interacts with KCNB1. Associates with KCNH2/ERG1. May associate with KCNQ2 and KCNQ3. Associates with HCN1 and probably HCN2. Heteromultimer with KCNC2. Interacts with KCNC2. Interacts with KCNQ1; forms a heterooligomer complex that targets to the membrane raft and leading to currents with an apparently instantaneous activation, a rapid deactivation process and a linear current-voltage relationship and decreases the amplitude of the outward current.

Its subcellular location is the cell membrane. The protein localises to the apical cell membrane. Ancillary protein that functions as a regulatory subunit of the voltage-gated potassium (Kv) channel complex composed of pore-forming and potassium-conducting alpha subunits and of regulatory beta subunits. KCNE2 beta subunit modulates the gating kinetics and enhances stability of the channel complex. Alters the gating of the delayed rectifier Kv channel containing KCNB1 alpha subunit. Associates with KCNH2/HERG alpha subunit Kv channel to form the rapidly activating component of the delayed rectifying potassium current (IKr) in heart. May associate with KCNQ2 and/or KCNQ3 alpha subunits to modulate the native M-type current. May associate with HCN1 and HCN2 channel subunits to increase potassium current. Forms a heterooligomer complex with KCNQ1/KVLQT1 alpha subunits which leads to currents with an apparently instantaneous activation, a rapid deactivation process and a linear current-voltage relationship and decreases the amplitude of the outward current. KCNQ1-KCNE2 channel associates with Na(+)-coupled myo-inositol symporter in the apical membrane of choroid plexus epithelium and regulates the myo-inositol gradient between blood and cerebrospinal fluid with an impact on neuron excitability. This Cavia porcellus (Guinea pig) protein is Potassium voltage-gated channel subfamily E member 2 (Kcne2).